The chain runs to 401 residues: Anhydro-N-acetylmuramic acid kinase (401 aa).

An ATP-binding site is contributed by 25-32; the sequence is GTSLDGLD.

This sequence belongs to the anhydro-N-acetylmuramic acid kinase family.

It catalyses the reaction 1,6-anhydro-N-acetyl-beta-muramate + ATP + H2O = N-acetyl-D-muramate 6-phosphate + ADP + H(+). The protein operates within amino-sugar metabolism; 1,6-anhydro-N-acetylmuramate degradation. It functions in the pathway cell wall biogenesis; peptidoglycan recycling. Functionally, catalyzes the specific phosphorylation of 1,6-anhydro-N-acetylmuramic acid (anhMurNAc) with the simultaneous cleavage of the 1,6-anhydro ring, generating MurNAc-6-P. Is required for the utilization of anhMurNAc either imported from the medium or derived from its own cell wall murein, and thus plays a role in cell wall recycling. This chain is Anhydro-N-acetylmuramic acid kinase, found in Pseudoalteromonas translucida (strain TAC 125).